Consider the following 307-residue polypeptide: Protein YIF1A (307 aa).

The disordered stretch occupies residues 1–42; the sequence is MNFQQQGYRATKPRARASPPTGGPMLFDDTSSGPPPMNNQNY. Over 1-148 the chain is Cytoplasmic; sequence MNFQQQGYRA…TPRHDVNAPD (148 aa). The helical transmembrane segment at 149–169 threads the bilayer; sequence LYIPTMAFITYILLAGMALGI. Residues 170-184 are Lumenal-facing; the sequence is QKRFSPEVLGLCAST. A helical membrane pass occupies residues 185 to 205; the sequence is ALVWMIIEVLVMLLSLYLLTV. The Cytoplasmic segment spans residues 206–213; sequence HTDLSTFD. Residues 214 to 236 traverse the membrane as a helical segment; the sequence is LVAYSGYKYVGMILTVFCGLLFG. Topologically, residues 237 to 239 are lumenal; sequence SDG. Residues 240–259 form a helical membrane-spanning segment; sequence YYVALAWSSCALMFFIVRSL. Over 260 to 285 the chain is Cytoplasmic; it reads KMKILSSISADSMGAGASAKPRFRLY. A helical transmembrane segment spans residues 286 to 306; sequence ITVASAAFQPFIIYWLTAHLV.

It belongs to the YIF1 family.

It is found in the endoplasmic reticulum membrane. Its subcellular location is the golgi apparatus membrane. It localises to the endoplasmic reticulum-Golgi intermediate compartment membrane. Functionally, possible role in transport between endoplasmic reticulum and Golgi. The polypeptide is Protein YIF1A (yif1a) (Danio rerio (Zebrafish)).